The sequence spans 318 residues: Pyrimidine-specific ribonucleoside hydrolase RihA (318 aa).

Residue histidine 240 is part of the active site.

The protein belongs to the IUNH family. RihA subfamily.

Functionally, hydrolyzes cytidine or uridine to ribose and cytosine or uracil, respectively. This Shewanella oneidensis (strain ATCC 700550 / JCM 31522 / CIP 106686 / LMG 19005 / NCIMB 14063 / MR-1) protein is Pyrimidine-specific ribonucleoside hydrolase RihA.